A 581-amino-acid chain; its full sequence is ATP-dependent lipid A-core flippase (581 aa).

Transmembrane regions (helical) follow at residues 21–41 (TVAIVAIIGMIGYSGMDALFI), 65–85 (FVVIALVIGRGVFNFMSSYCL), 138–158 (ALLIVVREGAFVVFLLAVMFY), 161–181 (WQLSLIFLVIIPLVAVIVTVV), 246–266 (LSVSIIQVLAASAMAVILWVV), and 271–291 (MIDTISSGDFVVLISSMMMLL). Residues 24–306 (IVAIIGMIGY…LANVNSDMQR (283 aa)) form the ABC transmembrane type-1 domain. In terms of domain architecture, ABC transporter spans 338–575 (IEVKNVTFKY…NGTYSALCKM (238 aa)). 372-379 (GRSGSGKS) contributes to the ATP binding site.

This sequence belongs to the ABC transporter superfamily. Lipid exporter (TC 3.A.1.106) family. Homodimer.

It localises to the cell inner membrane. The catalysed reaction is ATP + H2O + lipid A-core oligosaccharideSide 1 = ADP + phosphate + lipid A-core oligosaccharideSide 2.. In terms of biological role, involved in lipopolysaccharide (LPS) biosynthesis. Translocates lipid A-core from the inner to the outer leaflet of the inner membrane. Transmembrane domains (TMD) form a pore in the inner membrane and the ATP-binding domain (NBD) is responsible for energy generation. This chain is ATP-dependent lipid A-core flippase, found in Pseudoalteromonas translucida (strain TAC 125).